The chain runs to 390 residues: Large ribosomal subunit protein uL3y (390 aa).

A disordered region spans residues 1 to 36 (MSHRKFEHPRHGSLGFLPRKRASRHRGKVKAFPKDD). Positions 18–31 (PRKRASRHRGKVKA) are enriched in basic residues.

This sequence belongs to the universal ribosomal protein uL3 family.

It localises to the cytoplasm. This Arabidopsis thaliana (Mouse-ear cress) protein is Large ribosomal subunit protein uL3y (ARP2).